We begin with the raw amino-acid sequence, 441 residues long: ATP-dependent RNA helicase SUB2 (441 aa).

Acidic residues predominate over residues 1-17 (MSHEGEEELLDYSDSEE). Positions 1–47 (MSHEGEEELLDYSDSEEIALPSTTVESGSNGDAKAETTTVKEENTEQ) are disordered. Residues 21–30 (PSTTVESGSN) show a composition bias toward polar residues. Residues 33-46 (AKAETTTVKEENTE) are compositionally biased toward basic and acidic residues. Positions 57 to 85 (TGFRDFLLKPELLRAIVDCGFEHPSEVQQ) match the Q motif motif. The Helicase ATP-binding domain maps to 88 to 263 (IPQSILGTDV…KKFMSSPLEI (176 aa)). An ATP-binding site is contributed by 101–108 (AKAGVGKT). The short motif at 210–213 (DECD) is the DECD box element. A Helicase C-terminal domain is found at 275 to 436 (GLQQYYVDVE…PYPAEGVDPS (162 aa)).

Belongs to the DEAD box helicase family. DECD subfamily.

It localises to the nucleus. It carries out the reaction ATP + H2O = ADP + phosphate + H(+). ATP-binding RNA helicase involved in transcription elongation and required for the export of mRNA out of the nucleus. SUB2 also plays a role in pre-mRNA splicing and spliceosome assembly. May be involved in rDNA and telomeric silencing, and maintenance of genome integrity. In Yarrowia lipolytica (strain CLIB 122 / E 150) (Yeast), this protein is ATP-dependent RNA helicase SUB2 (SUB2).